The sequence spans 571 residues: Proline--tRNA ligase (571 aa).

The protein belongs to the class-II aminoacyl-tRNA synthetase family. ProS type 1 subfamily. As to quaternary structure, homodimer.

It localises to the cytoplasm. It carries out the reaction tRNA(Pro) + L-proline + ATP = L-prolyl-tRNA(Pro) + AMP + diphosphate. Its function is as follows. Catalyzes the attachment of proline to tRNA(Pro) in a two-step reaction: proline is first activated by ATP to form Pro-AMP and then transferred to the acceptor end of tRNA(Pro). As ProRS can inadvertently accommodate and process non-cognate amino acids such as alanine and cysteine, to avoid such errors it has two additional distinct editing activities against alanine. One activity is designated as 'pretransfer' editing and involves the tRNA(Pro)-independent hydrolysis of activated Ala-AMP. The other activity is designated 'posttransfer' editing and involves deacylation of mischarged Ala-tRNA(Pro). The misacylated Cys-tRNA(Pro) is not edited by ProRS. The chain is Proline--tRNA ligase from Stutzerimonas stutzeri (strain A1501) (Pseudomonas stutzeri).